A 346-amino-acid polypeptide reads, in one-letter code: Elongation factor Ts (346 aa).

The segment at 80–83 (TDFV) is involved in Mg(2+) ion dislocation from EF-Tu.

It belongs to the EF-Ts family.

Its subcellular location is the cytoplasm. In terms of biological role, associates with the EF-Tu.GDP complex and induces the exchange of GDP to GTP. It remains bound to the aminoacyl-tRNA.EF-Tu.GTP complex up to the GTP hydrolysis stage on the ribosome. This Streptococcus agalactiae serotype Ia (strain ATCC 27591 / A909 / CDC SS700) protein is Elongation factor Ts.